The following is a 106-amino-acid chain: MVGINVKQPEKECHDPNCPFHGELSVRGQVIEGTVTSDKADRTITVERSFYKYINKFERYEKRNSKIKAHKPDCLDVKVGDSVKIAECRQLSKTKHFVLVEVKEGE.

This sequence belongs to the universal ribosomal protein uS17 family. Part of the 30S ribosomal subunit.

One of the primary rRNA binding proteins, it binds specifically to the 5'-end of 16S ribosomal RNA. The sequence is that of Small ribosomal subunit protein uS17 from Methanosphaera stadtmanae (strain ATCC 43021 / DSM 3091 / JCM 11832 / MCB-3).